Consider the following 117-residue polypeptide: Ig heavy chain V region 345 (117 aa).

Residues 1–19 form the signal peptide; it reads MNFGLRLIFLVLTLKGVKC. A framework-1 region spans residues 20 to 49; sequence EVQLVESGGGLVKPGGSLKLSCAASGFAFS. C41 and C115 form a disulfide bridge. The segment at 50–54 is complementarity-determining-1; the sequence is SYDMS. The segment at 55–68 is framework-2; it reads WVRQTPEKRLEWVA. Residues 69–85 are complementarity-determining-2; it reads YISSGGGSTYYPDTVKG. The interval 86 to 117 is framework-3; that stretch reads RFTISRDNAKNTLYLQMSSLKSEDTAMYYCAR.

The sequence is that of Ig heavy chain V region 345 from Mus musculus (Mouse).